The following is a 479-amino-acid chain: Preferentially expressed antigen in melanoma-like protein 7 (479 aa).

One copy of the LRR 1; degenerate repeat lies at 96 to 124 (MGRLKKVDFRDAQHHASLDMQDEREGRDY). One copy of the LRR 2; degenerate repeat lies at 179–203 (HLCCEKLEIGAVEVSKVRNVLKFLQ). The LRR 3; degenerate repeat unit spans residues 204–230 (PELIKELKLNTVGNLSKLAKFVPFIRK). The stretch at 231 to 265 (MRNLQKLMLVRTFGTRTFTQEEKQNISKIISLFCK) is one LRR 4; degenerate repeat. 5 LRR repeats span residues 266–291 (LSCL…LRCL), 292–323 (EAPL…SQLK), 324–347 (HLCL…LKRV), 348–375 (AANL…ALIK), and 376–400 (CTQL…FLHR).

This sequence belongs to the PRAME family. In terms of assembly, interacts with UHRF1. Seems to be specific to pluripotent tissues in the early embryo. Not detected in somatic tissues.

Promotes maintenance and self-renewal of pluripotent embryonic stem cells (ESCs), downstream of LIF/STAT3. Maintains the pluripotency state of ESCs by repressing DNA methylation through the regulation of UHRF1 stability. Mediates the proteasomal degradation of UHRF1. Is required for the establishment of the blastocyst. In Mus musculus (Mouse), this protein is Preferentially expressed antigen in melanoma-like protein 7.